The following is a 359-amino-acid chain: 3-dehydroquinate synthase (359 aa).

NAD(+) is bound by residues 71–76 (DGEQFK), 105–109 (GVIGD), 129–130 (TT), Lys-142, Lys-151, and 169–172 (CLQT). Residues Glu-184, His-247, and His-264 each coordinate Zn(2+).

It belongs to the sugar phosphate cyclases superfamily. Dehydroquinate synthase family. Co(2+) is required as a cofactor. Requires Zn(2+) as cofactor. NAD(+) serves as cofactor.

The protein resides in the cytoplasm. It carries out the reaction 7-phospho-2-dehydro-3-deoxy-D-arabino-heptonate = 3-dehydroquinate + phosphate. It participates in metabolic intermediate biosynthesis; chorismate biosynthesis; chorismate from D-erythrose 4-phosphate and phosphoenolpyruvate: step 2/7. Functionally, catalyzes the conversion of 3-deoxy-D-arabino-heptulosonate 7-phosphate (DAHP) to dehydroquinate (DHQ). The sequence is that of 3-dehydroquinate synthase from Shewanella sp. (strain ANA-3).